An 82-amino-acid polypeptide reads, in one-letter code: UPF0298 protein SPCG_0698 (82 aa).

Belongs to the UPF0298 family.

The protein resides in the cytoplasm. The chain is UPF0298 protein SPCG_0698 from Streptococcus pneumoniae (strain CGSP14).